We begin with the raw amino-acid sequence, 260 residues long: Carbonic anhydrase 3 (260 aa).

Alanine 2 carries the post-translational modification N-acetylalanine. The region spanning 3-259 is the Alpha-carbonic anhydrase domain; the sequence is KEWGYADHNG…IKGRIVKASF (257 aa). 4 positions are modified to phosphoserine: serine 29, serine 43, serine 50, and serine 55. The tract at residues 64–67 is involved in proton transfer; sequence KTCR. Threonine 73 bears the Phosphothreonine mark. Zn(2+) contacts are provided by histidine 94, histidine 96, and histidine 119. Tyrosine 127 carries the post-translational modification Phosphotyrosine. Threonine 176 carries the post-translational modification Phosphothreonine. 2 positions are modified to S-glutathionyl cysteine: cysteine 182 and cysteine 187. Residue 198–199 coordinates substrate; it reads TT. Threonine 216 is modified (phosphothreonine). Serine 219 bears the Phosphoserine mark.

Belongs to the alpha-carbonic anhydrase family. Zn(2+) is required as a cofactor. Post-translationally, S-thiolated both by thiol-disulfide exchange with glutathione disulfide and by oxyradical-initiated S-thiolation with reduced glutathione. In terms of processing, S-glutathionylated in hepatocytes under oxidative stress.

It localises to the cytoplasm. The enzyme catalyses hydrogencarbonate + H(+) = CO2 + H2O. With respect to regulation, inhibited by acetazolamide. Reversible hydration of carbon dioxide. This Sus scrofa (Pig) protein is Carbonic anhydrase 3.